Consider the following 328-residue polypeptide: L-lactate dehydrogenase (328 aa).

NAD(+) is bound by residues valine 18, glutamate 39, lysine 46, tyrosine 71, and glycine 85–alanine 86. Substrate-binding residues include glutamine 88 and arginine 94. NAD(+)-binding positions include serine 107, alanine 124 to asparagine 126, and serine 149. Asparagine 126 to aspartate 129 is a binding site for substrate. Aspartate 154–arginine 157 provides a ligand contact to substrate. Beta-D-fructose 1,6-bisphosphate-binding residues include arginine 159 and histidine 174. The active-site Proton acceptor is the histidine 181. Tyrosine 226 is subject to Phosphotyrosine. Threonine 235 provides a ligand contact to substrate.

The protein belongs to the LDH/MDH superfamily. LDH family. Homotetramer.

Its subcellular location is the cytoplasm. It carries out the reaction (S)-lactate + NAD(+) = pyruvate + NADH + H(+). Its pathway is fermentation; pyruvate fermentation to lactate; (S)-lactate from pyruvate: step 1/1. With respect to regulation, allosterically activated by fructose 1,6-bisphosphate (FBP). Functionally, catalyzes the conversion of lactate to pyruvate. This is L-lactate dehydrogenase from Streptococcus mutans serotype c (strain ATCC 700610 / UA159).